Reading from the N-terminus, the 835-residue chain is Leucine--tRNA ligase (835 aa).

The 'HIGH' region motif lies at 36–46; sequence PYPSGKIHVGH. Positions 602–606 match the 'KMSKS' region motif; it reads KMSKS. Lys605 is an ATP binding site.

Belongs to the class-I aminoacyl-tRNA synthetase family.

It is found in the cytoplasm. It carries out the reaction tRNA(Leu) + L-leucine + ATP = L-leucyl-tRNA(Leu) + AMP + diphosphate. This chain is Leucine--tRNA ligase, found in Rickettsia rickettsii (strain Iowa).